The following is a 67-amino-acid chain: Large ribosomal subunit protein bL35 (67 aa).

The segment at 1–20 (MPKLKTKSGAKKRFVPKKSG) is disordered.

This sequence belongs to the bacterial ribosomal protein bL35 family.

This chain is Large ribosomal subunit protein bL35, found in Anaeromyxobacter dehalogenans (strain 2CP-C).